Reading from the N-terminus, the 933-residue chain is Progesterone receptor (933 aa).

An AF3; mediates transcriptional activation region spans residues 1–164 (MTELKAKGPR…PATQGVLSPL (164 aa)). The tract at residues 1 to 256 (MTELKAKGPR…AAAGGGAAAV (256 aa)) is disordered. The interval 1–566 (MTELKAKGPR…YSFESLPQKI (566 aa)) is modulating, Pro-Rich. S20 bears the Phosphoserine mark. The short motif at 55–59 (LDGLL) is the LXXL motif 1 element. S81 carries the phosphoserine modification. Residues 115-119 (LDTLL) carry the LXXL motif 2 motif. Phosphoserine occurs at positions 130 and 162. Residues 165-305 (MSRSGCKAGD…LATTMMDFIH (141 aa)) form a mediates transcriptional transrepression region. The Nuclear localization signal motif lies at 183–187 (KVLPR). 2 positions are modified to phosphoserine: S190 and S213. The span at 220–231 (EVEEEDGSESEE) shows a compositional bias: acidic residues. Residues 232–246 (SAGPLLKGKPRALGG) are compositionally biased toward low complexity. S294 is modified (phosphoserine; by MAPK1). The disordered stretch occupies residues 331–378 (GGAGAASAFAPPRSSPSASSTPVAVGDFPDCAYPPDAEPKDDAYPLYS). The segment covering 335 to 350 (AASAFAPPRSSPSASS) has biased composition (low complexity). A Phosphoserine; by MAPK modification is found at S345. Residue K388 forms a Glycyl lysine isopeptide (Lys-Gly) (interchain with G-Cter in SUMO); alternate linkage. K388 participates in a covalent cross-link: Glycyl lysine isopeptide (Lys-Gly) (interchain with G-Cter in ubiquitin); alternate. The residue at position 400 (S400) is a Phosphoserine; by CDK2. The disordered stretch occupies residues 415-452 (PDFPLGPPPPLPPRAPPSRPGEAAVTAAPASASVSSAS). Positions 418–433 (PLGPPPPLPPRAPPSR) are enriched in pro residues. Low complexity predominate over residues 434-452 (PGEAAVTAAPASASVSSAS). The segment at 456–546 (STLECILYKA…VYPPYLNYLR (91 aa)) is AF1; mediates transcriptional activation. K531 is covalently cross-linked (Glycyl lysine isopeptide (Lys-Gly) (interchain with G-Cter in SUMO)). 2 NR C4-type zinc fingers span residues 567–587 (CLICGDEASGCHYGVLTCGSC) and 603–627 (CAGRNDCIVDKIRRKNCPACRLRKC). Positions 567–639 (CLICGDEASG…AGMVLGGRKF (73 aa)) form a DNA-binding region, nuclear receptor. At S676 the chain carries Phosphoserine. The NR LBD domain occupies 679–913 (QDIQLIPPLI…EFPEMMSEVI (235 aa)). An AF2; mediates transcriptional activation region spans residues 687–933 (LINLLMSIEP…MVKPLLFHKK (247 aa)). R766 serves as a coordination point for progesterone.

This sequence belongs to the nuclear hormone receptor family. Interacts with SMARD1 and UNC45A. Interacts with CUEDC2; the interaction promotes ubiquitination, decreases sumoylation, and represses transcriptional activity. Interacts with PIAS3; the interaction promotes sumoylation of PR in a hormone-dependent manner, inhibits DNA-binding, and alters nuclear export. Interacts with SP1; the interaction requires ligand-induced phosphorylation on Ser-345 by ERK1/2-MAPK. Interacts with PRMT2. Interacts with NCOA2 and NCOA1. Interacts with KLF9. Interacts with GTF2B. In terms of processing, phosphorylated on multiple serine sites. Several of these sites are hormone-dependent. Phosphorylation on Ser-294 is highly hormone-dependent and modulates ubiquitination and sumoylation on Lys-388. Phosphorylation on Ser-102 and Ser-345 also requires induction by hormone. Basal phosphorylation on Ser-81, Ser-162, Ser-190 and Ser-400 is increased in response to progesterone and can be phosphorylated in vitro by the CDK2-A1 complex. Increased levels of phosphorylation on Ser-400 also in the presence of EGF, heregulin, IGF, PMA and FBS. Phosphorylation at this site by CDK2 is ligand-independent, and increases nuclear translocation and transcriptional activity. Phosphorylation at Ser-162 and Ser-294, but not at Ser-190, is impaired during the G(2)/M phase of the cell cycle. Phosphorylation on Ser-345 by ERK1/2 MAPK is required for interaction with SP1. Sumoylation is hormone-dependent and represses transcriptional activity. Sumoylation on all three sites is enhanced by PIAS3. Desumoylated by SENP1. Sumoylation on Lys-388, the main site of sumoylation, is repressed by ubiquitination on the same site, and modulated by phosphorylation at Ser-294. Post-translationally, ubiquitination is hormone-dependent and represses sumoylation on the same site. Promoted by MAPK-mediated phosphorylation on Ser-294. Ubiquitinated by UBR5, leading to its degradation: UBR5 specifically recognizes and binds ligand-bound PGR when it is not associated with coactivators (NCOAs). In presence of NCOAs, the UBR5-degron is not accessible, preventing its ubiquitination and degradation. In terms of processing, palmitoylated by ZDHHC7 and ZDHHC21. Palmitoylation is required for plasma membrane targeting and for rapid intracellular signaling via ERK and AKT kinases and cAMP generation.

It localises to the nucleus. The protein localises to the cytoplasm. Its function is as follows. The steroid hormones and their receptors are involved in the regulation of eukaryotic gene expression and affect cellular proliferation and differentiation in target tissues. Transcriptional activator of several progesteron-dependent promoters in a variety of cell types. Involved in activation of SRC-dependent MAPK signaling on hormone stimulation. The protein is Progesterone receptor (PGR) of Pan paniscus (Pygmy chimpanzee).